Here is a 122-residue protein sequence, read N- to C-terminus: Anti-sigma-F factor antagonist RsfB (122 aa).

In terms of domain architecture, STAS spans 7 to 115 (ITVTVADHNG…STLHDALTGV (109 aa)). Serine 61 carries the post-translational modification Phosphoserine.

The protein belongs to the anti-sigma-factor antagonist family. In terms of assembly, interacts with anti-sigma-F factor RsbW (UsfX). Its phosphorylation may prevent this interaction. Putative phosphorylation on Ser-61 may prevent interaction with RsbW.

Its function is as follows. Positive regulator of sigma-F (SigF) activity. Binds to anti-sigma-F factor RsbW (UsfX) preventing its binding to SigF, thus activating transcription. This is Anti-sigma-F factor antagonist RsfB (rsfB) from Mycobacterium tuberculosis (strain CDC 1551 / Oshkosh).